A 424-amino-acid polypeptide reads, in one-letter code: UPF0229 protein Sde_0732 (424 aa).

The segment at 52-109 (IGIPSKDISEPVFHHDSGGVDTRVLPGNDQFHSGDRIQRPPSGQGGGGSGKGASDSGE) is disordered. The span at 58 to 69 (DISEPVFHHDSG) shows a compositional bias: basic and acidic residues.

This sequence belongs to the UPF0229 family.

The chain is UPF0229 protein Sde_0732 from Saccharophagus degradans (strain 2-40 / ATCC 43961 / DSM 17024).